The primary structure comprises 258 residues: Hydroxyacylglutathione hydrolase (258 aa).

His52, His54, Asp56, His57, His109, Asp126, and His164 together coordinate Zn(2+).

Belongs to the metallo-beta-lactamase superfamily. Glyoxalase II family. In terms of assembly, monomer. Requires Zn(2+) as cofactor.

It catalyses the reaction an S-(2-hydroxyacyl)glutathione + H2O = a 2-hydroxy carboxylate + glutathione + H(+). It participates in secondary metabolite metabolism; methylglyoxal degradation; (R)-lactate from methylglyoxal: step 2/2. Thiolesterase that catalyzes the hydrolysis of S-D-lactoyl-glutathione to form glutathione and D-lactic acid. This Xylella fastidiosa (strain M23) protein is Hydroxyacylglutathione hydrolase.